We begin with the raw amino-acid sequence, 96 residues long: Small ribosomal subunit protein bS20 (96 aa).

Belongs to the bacterial ribosomal protein bS20 family.

Functionally, binds directly to 16S ribosomal RNA. In Anaplasma phagocytophilum (strain HZ), this protein is Small ribosomal subunit protein bS20.